The following is a 779-amino-acid chain: Catalase-peroxidase (779 aa).

The segment at residues 148–270 (WHSAGTYRIT…LGAVQMGLIY (123 aa)) is a cross-link (tryptophyl-tyrosyl-methioninium (Trp-Tyr) (with M-296)). His149 serves as the catalytic Proton acceptor. A cross-link (tryptophyl-tyrosyl-methioninium (Tyr-Met) (with W-148)) is located at residues 270 to 296 (YVNPEGPNGKPDPIAAAKDIRETFFRM). His311 contacts heme b.

It belongs to the peroxidase family. Peroxidase/catalase subfamily. Homodimer or homotetramer. The cofactor is heme b. Post-translationally, formation of the three residue Trp-Tyr-Met cross-link is important for the catalase, but not the peroxidase activity of the enzyme.

The enzyme catalyses H2O2 + AH2 = A + 2 H2O. The catalysed reaction is 2 H2O2 = O2 + 2 H2O. Its function is as follows. Bifunctional enzyme with both catalase and broad-spectrum peroxidase activity. The chain is Catalase-peroxidase from Bradyrhizobium diazoefficiens (strain JCM 10833 / BCRC 13528 / IAM 13628 / NBRC 14792 / USDA 110).